The following is a 365-amino-acid chain: MSRPVPNPGILDIAPYTPGKSPVAEPGRKVFKLSANETPFGPSPHAIAAYKGAADHLEDYPEGTSRVLREAIGRAYGLDPDRIICGAGSDEILNLLAHTYLGPGDEAIATTYGFLVYPIATMANGAKLVIAEEKNLTCDVDAILAKVSPSTKLVWLANPNNPTGTYVPFDEVKRLRAGLPEHVILVLDGAYADYVGKNDYESGIELVSTTDNTVVTRTFSKIHGLAALRIGWMFGPANIVDAMNRIRGPFNTSVPAQLAAVAAINDTAHVEMSRAHTETWRNWLSEEFTKLGLTVTPSVCNFVLVHFPTAKGKTAADADAFLTKRGLVLRALNNYGLPHALRMTIGTEEANRLVVEAVADFMAQP.

The segment at 1 to 23 (MSRPVPNPGILDIAPYTPGKSPV) is disordered. Lys-221 is modified (N6-(pyridoxal phosphate)lysine).

This sequence belongs to the class-II pyridoxal-phosphate-dependent aminotransferase family. Histidinol-phosphate aminotransferase subfamily. As to quaternary structure, homodimer. The cofactor is pyridoxal 5'-phosphate.

The catalysed reaction is L-histidinol phosphate + 2-oxoglutarate = 3-(imidazol-4-yl)-2-oxopropyl phosphate + L-glutamate. The protein operates within amino-acid biosynthesis; L-histidine biosynthesis; L-histidine from 5-phospho-alpha-D-ribose 1-diphosphate: step 7/9. The sequence is that of Histidinol-phosphate aminotransferase from Rhodopseudomonas palustris (strain BisB18).